A 379-amino-acid polypeptide reads, in one-letter code: Cytochrome b (379 aa).

Helical transmembrane passes span F34–M54, W78–I99, W114–L134, and F179–T199. Residues H84 and H98 each contribute to the heme b site. Heme b-binding residues include H183 and H197. An a ubiquinone-binding site is contributed by H202. 4 helical membrane passes run L227–S247, L289–H309, L321–S341, and F348–P368.

Belongs to the cytochrome b family. The cytochrome bc1 complex contains 11 subunits: 3 respiratory subunits (MT-CYB, CYC1 and UQCRFS1), 2 core proteins (UQCRC1 and UQCRC2) and 6 low-molecular weight proteins (UQCRH/QCR6, UQCRB/QCR7, UQCRQ/QCR8, UQCR10/QCR9, UQCR11/QCR10 and a cleavage product of UQCRFS1). This cytochrome bc1 complex then forms a dimer. It depends on heme b as a cofactor.

It localises to the mitochondrion inner membrane. Its function is as follows. Component of the ubiquinol-cytochrome c reductase complex (complex III or cytochrome b-c1 complex) that is part of the mitochondrial respiratory chain. The b-c1 complex mediates electron transfer from ubiquinol to cytochrome c. Contributes to the generation of a proton gradient across the mitochondrial membrane that is then used for ATP synthesis. This chain is Cytochrome b (MT-CYB), found in Dromaius novaehollandiae (Emu).